A 360-amino-acid polypeptide reads, in one-letter code: Phospho-N-acetylmuramoyl-pentapeptide-transferase (360 aa).

A run of 10 helical transmembrane segments spans residues 19–39 (LTYL…LSIF), 73–93 (TMGG…WADL), 95–115 (SVYT…GWTD), 136–156 (YLSL…DTPI), 173–193 (GILF…AVNL), 199–219 (GLAI…AYLS), 233–253 (IAGA…GLGF), 263–283 (VFMG…VAVV), 288–308 (LAFA…MIQV), and 338–358 (VTIR…STLK).

It belongs to the glycosyltransferase 4 family. MraY subfamily. Requires Mg(2+) as cofactor.

It localises to the cell inner membrane. It carries out the reaction UDP-N-acetyl-alpha-D-muramoyl-L-alanyl-gamma-D-glutamyl-meso-2,6-diaminopimeloyl-D-alanyl-D-alanine + di-trans,octa-cis-undecaprenyl phosphate = di-trans,octa-cis-undecaprenyl diphospho-N-acetyl-alpha-D-muramoyl-L-alanyl-D-glutamyl-meso-2,6-diaminopimeloyl-D-alanyl-D-alanine + UMP. Its pathway is cell wall biogenesis; peptidoglycan biosynthesis. Its function is as follows. Catalyzes the initial step of the lipid cycle reactions in the biosynthesis of the cell wall peptidoglycan: transfers peptidoglycan precursor phospho-MurNAc-pentapeptide from UDP-MurNAc-pentapeptide onto the lipid carrier undecaprenyl phosphate, yielding undecaprenyl-pyrophosphoryl-MurNAc-pentapeptide, known as lipid I. The protein is Phospho-N-acetylmuramoyl-pentapeptide-transferase of Dichelobacter nodosus (strain VCS1703A).